The chain runs to 148 residues: UPF0540 protein At1g62000 (148 aa).

Positions 1 to 21 (MNATKFVVLLVIGILCAIVTA) are cleaved as a signal peptide. Residues 123 to 132 (RANGKVASAS) show a composition bias toward low complexity. Positions 123–148 (RANGKVASASRVKGSSEKKKGKGKKD) are disordered.

This sequence belongs to the UPF0540 family.

The protein is UPF0540 protein At1g62000 of Arabidopsis thaliana (Mouse-ear cress).